Reading from the N-terminus, the 312-residue chain is Ribosomal RNA small subunit methyltransferase H (312 aa).

Residues Gly35–His37, Asp55, Phe79, Asp101, and Gln108 contribute to the S-adenosyl-L-methionine site.

The protein belongs to the methyltransferase superfamily. RsmH family.

It localises to the cytoplasm. It carries out the reaction cytidine(1402) in 16S rRNA + S-adenosyl-L-methionine = N(4)-methylcytidine(1402) in 16S rRNA + S-adenosyl-L-homocysteine + H(+). In terms of biological role, specifically methylates the N4 position of cytidine in position 1402 (C1402) of 16S rRNA. The polypeptide is Ribosomal RNA small subunit methyltransferase H (Glaesserella parasuis serovar 5 (strain SH0165) (Haemophilus parasuis)).